Here is a 290-residue protein sequence, read N- to C-terminus: Arylamine N-acetyltransferase 2 (290 aa).

Cysteine 68 (acyl-thioester intermediate) is an active-site residue. 2 residues coordinate CoA: threonine 103 and glycine 104. 106–107 (IH) contacts substrate. Active-site residues include histidine 107 and aspartate 122. CoA contacts are provided by tyrosine 208, threonine 214, and serine 287.

This sequence belongs to the arylamine N-acetyltransferase family.

The protein localises to the cytoplasm. The enzyme catalyses an arylamine + acetyl-CoA = an N-acetylarylamine + CoA. The catalysed reaction is an N-hydroxyarylamine + acetyl-CoA = an N-acetoxyarylamine + CoA. Functionally, catalyzes the N- or O-acetylation of various arylamine and heterocyclic amine substrates, and participates in the detoxification of a plethora of hydrazine and arylamine drugs. This chain is Arylamine N-acetyltransferase 2 (NAT2), found in Macaca mulatta (Rhesus macaque).